Reading from the N-terminus, the 1193-residue chain is Tubulin monoglutamylase TTLL4 (1193 aa).

Disordered stretches follow at residues 1-37 (MASAGTEHYSIGLRRGNSFKQRHPSGTVSASPSEKPS) and 468-535 (VHLD…CSSL). A compositionally biased stretch (polar residues) spans 24–34 (PSGTVSASPSE). A compositionally biased stretch (basic and acidic residues) spans 472–482 (QPGKEPEEAKD). Positions 502 to 515 (EPEDTEDELGDGLE) are enriched in acidic residues. Residues 599 to 942 (RRLLRWKMST…VLPNMEDIIS (344 aa)) enclose the TTL domain. Serine 686 bears the Phosphoserine mark. Residues lysine 716, 722 to 723 (RG), 744 to 747 (QRYL), and 757 to 759 (KFD) each bind ATP. Residue arginine 722 coordinates a protein. Arginine 783 is a binding site for L-glutamate. Residue 804-805 (TN) participates in ATP binding. Residues tyrosine 806, serine 807, and lysine 828 each coordinate L-glutamate. Aspartate 888, glutamate 901, and asparagine 903 together coordinate Mg(2+). Positions 913–1027 (PLDISIKGQM…RGQFERIFPS (115 aa)) are c-MTBD region. Lysine 919 serves as a coordination point for L-glutamate. A compositionally biased stretch (low complexity) spans 943-960 (SSSSPSSSSGSSTSLPSS). Disordered regions lie at residues 943 to 966 (SSSSPSSSSGSSTSLPSSPRDKCQ) and 1092 to 1193 (MTTS…AVSS). Composition is skewed to polar residues over residues 1092 to 1102 (MTTSKGDGTPN) and 1131 to 1153 (SQAGLSPISRKTLSSRSNENTSK). Residues 1168-1182 (SGQSSRLSAASASQS) are compositionally biased toward low complexity. Over residues 1183–1193 (VTDSRLTAVSS) the composition is skewed to polar residues.

This sequence belongs to the tubulin--tyrosine ligase family. Mg(2+) is required as a cofactor. In terms of tissue distribution, highly expressed in testis. Expressed in brain, heart, kidney, liver, lung, muscle and spleen. In the brain, expressed in ependymal cilia, the cortex and the striatum. Expressed in blastomere.

The protein resides in the cytoplasm. It localises to the cell projection. Its subcellular location is the cilium. The protein localises to the cytoskeleton. It is found in the cilium basal body. The catalysed reaction is L-glutamyl-[protein] + L-glutamate + ATP = gamma-L-glutamyl-L-glutamyl-[protein] + ADP + phosphate + H(+). In terms of biological role, monoglutamylase which modifies both tubulin and non-tubulin proteins, adding a single glutamate on the gamma-carboxyl group of specific glutamate residues of target proteins. Involved in the side-chain initiation step of the polyglutamylation reaction but not in the elongation step. Preferentially modifies beta-tail tubulin over the alpha-tubulin. Monoglutamylates nucleosome assembly proteins NAP1L1 and NAP1L4. Monoglutamylates nucleotidyltransferase CGAS, leading to inhibition of CGAS catalytic activity, thereby preventing antiviral defense function. Involved in KLF4 glutamylation which impedes its ubiquitination, thereby leading to somatic cell reprogramming, pluripotency maintenance and embryogenesis. This Mus musculus (Mouse) protein is Tubulin monoglutamylase TTLL4.